A 203-amino-acid chain; its full sequence is Large ribosomal subunit protein bL25 (203 aa).

It belongs to the bacterial ribosomal protein bL25 family. CTC subfamily. In terms of assembly, part of the 50S ribosomal subunit; part of the 5S rRNA/L5/L18/L25 subcomplex. Contacts the 5S rRNA. Binds to the 5S rRNA independently of L5 and L18.

Functionally, this is one of the proteins that binds to the 5S RNA in the ribosome where it forms part of the central protuberance. The chain is Large ribosomal subunit protein bL25 from Dechloromonas aromatica (strain RCB).